The following is a 522-amino-acid chain: Solute carrier family 2, facilitated glucose transporter member 2 (522 aa).

Over 1 to 10 (MSEDKITGTL) the chain is Cytoplasmic. Residues 11–31 (AFTVFTAVLGSFQFGYDIGVI) traverse the membrane as a helical segment. The Extracellular segment spans residues 32–96 (NAPQEVIISH…SAHIVTMLWS (65 aa)). An N-linked (GlcNAc...) asparagine glycan is attached at Asn-62. A helical transmembrane segment spans residues 97–117 (LSVSSFAVGGMVASFFGGWLG). Residues 118–125 (DKLGRIKA) are Cytoplasmic-facing. A helical membrane pass occupies residues 126-146 (MLAANSLSLTGALLMGCSKFG). At 147–156 (PAHALIIAGR) the chain is on the extracellular side. A helical transmembrane segment spans residues 157-177 (SVSGLYCGLISGLVPMYIGEI). Residues 178-185 (APTTLRGA) lie on the Cytoplasmic side of the membrane. The helical transmembrane segment at 186 to 206 (LGTLHQLALVTGILISQIAGL) threads the bilayer. Gln-191 is a binding site for D-glucose. Residues 207 to 215 (SFILGNQDY) lie on the Extracellular side of the membrane. A helical transmembrane segment spans residues 216–236 (WHILLGLSAVPALLQCLLLLF). The Cytoplasmic segment spans residues 237–301 (CPESPRYLYL…LFTDPNYRQP (65 aa)). A helical transmembrane segment spans residues 302-322 (IVVALMLHLAQQFSGINGIFY). Residues 312–313 (QQ) and Asn-318 each bind D-glucose. Residues 323 to 337 (YSTSIFQTAGISQPV) are Extracellular-facing. The helical transmembrane segment at 338 to 358 (YATIGVGAINMIFTAVSVLLV) threads the bilayer. Asn-347 provides a ligand contact to D-glucose. Over 359-365 (EKAGRRT) the chain is Cytoplasmic. Residues 366–386 (LFLAGMIGMFFCAVFMSLGLV) traverse the membrane as a helical segment. Residues 387–401 (LLDKFTWMSYVSMTA) are Extracellular-facing. The helical transmembrane segment at 402-422 (IFLFVSFFEIGPGPIPWFMVA) threads the bilayer. The D-glucose site is built by Glu-410 and Trp-418. Over 423 to 431 (EFFSQGPRP) the chain is Cytoplasmic. Residues 432–452 (TALALAAFSNWVCNFIIALCF) form a helical membrane-spanning segment. Topologically, residues 453–459 (QYIADFL) are extracellular. The helical transmembrane segment at 460-480 (GPYVFFLFAGVVLVFTLFTFF) threads the bilayer. The Cytoplasmic segment spans residues 481–522 (KVPETKGKSFDEIAAEFRKKSGSAPPRKATVQMEFLGSSETV). Residue Thr-521 is modified to Phosphothreonine.

This sequence belongs to the major facilitator superfamily. Sugar transporter (TC 2.A.1.1) family. Glucose transporter subfamily. N-glycosylated; required for stability and retention at the cell surface of pancreatic beta cells. As to expression, present in liver, intestine, kidney and beta-pancreatic islet cells.

It localises to the cell membrane. It carries out the reaction D-glucose(out) = D-glucose(in). The catalysed reaction is D-fructose(out) = D-fructose(in). It catalyses the reaction L-dehydroascorbate(out) = L-dehydroascorbate(in). The enzyme catalyses D-galactose(in) = D-galactose(out). With respect to regulation, D-glucose and maltose competitively inhibit fructose transport. D-glucose, D-fructose and maltose inhibit deoxyglucose transport. Facilitative hexose transporter that mediates the transport of glucose, fructose and galactose. Likely mediates the bidirectional transfer of glucose across the plasma membrane of hepatocytes and is responsible for uptake of glucose by the beta cells; may comprise part of the glucose-sensing mechanism of the beta cell. May also participate with the Na(+)/glucose cotransporter in the transcellular transport of glucose in the small intestine and kidney. Also able to mediate the transport of dehydroascorbate. This is Solute carrier family 2, facilitated glucose transporter member 2 from Rattus norvegicus (Rat).